A 411-amino-acid polypeptide reads, in one-letter code: NADH-quinone oxidoreductase subunit D 2 (411 aa).

Belongs to the complex I 49 kDa subunit family. In terms of assembly, NDH-1 is composed of 14 different subunits. Subunits NuoB, C, D, E, F, and G constitute the peripheral sector of the complex.

The protein localises to the cell membrane. The catalysed reaction is a quinone + NADH + 5 H(+)(in) = a quinol + NAD(+) + 4 H(+)(out). Its function is as follows. NDH-1 shuttles electrons from NADH, via FMN and iron-sulfur (Fe-S) centers, to quinones in the respiratory chain. The immediate electron acceptor for the enzyme in this species is believed to be ubiquinone. Couples the redox reaction to proton translocation (for every two electrons transferred, four hydrogen ions are translocated across the cytoplasmic membrane), and thus conserves the redox energy in a proton gradient. The protein is NADH-quinone oxidoreductase subunit D 2 of Chloroflexus aurantiacus (strain ATCC 29366 / DSM 635 / J-10-fl).